The chain runs to 359 residues: 4-hydroxy-3-methylbut-2-en-1-yl diphosphate synthase (flavodoxin) (359 aa).

Residues Cys264, Cys267, Cys299, and Glu306 each coordinate [4Fe-4S] cluster.

This sequence belongs to the IspG family. [4Fe-4S] cluster serves as cofactor.

It carries out the reaction (2E)-4-hydroxy-3-methylbut-2-enyl diphosphate + oxidized [flavodoxin] + H2O + 2 H(+) = 2-C-methyl-D-erythritol 2,4-cyclic diphosphate + reduced [flavodoxin]. The protein operates within isoprenoid biosynthesis; isopentenyl diphosphate biosynthesis via DXP pathway; isopentenyl diphosphate from 1-deoxy-D-xylulose 5-phosphate: step 5/6. In terms of biological role, converts 2C-methyl-D-erythritol 2,4-cyclodiphosphate (ME-2,4cPP) into 1-hydroxy-2-methyl-2-(E)-butenyl 4-diphosphate. This chain is 4-hydroxy-3-methylbut-2-en-1-yl diphosphate synthase (flavodoxin), found in Mycoplasmoides gallisepticum (strain R(low / passage 15 / clone 2)) (Mycoplasma gallisepticum).